Consider the following 433-residue polypeptide: Legumain (433 aa).

The signal sequence occupies residues 1–17 (MVWKVAVFLSVALGIGA). The N-linked (GlcNAc...) asparagine glycan is linked to Asn-91. His-148 is an active-site residue. N-linked (GlcNAc...) asparagine glycosylation is present at Asn-167. Cys-189 serves as the catalytic Nucleophile. 2 N-linked (GlcNAc...) asparagine glycosylation sites follow: Asn-263 and Asn-272. The propeptide occupies 324–433 (DLEESRQLTE…SMDHVCLGHY (110 aa)). Disulfide bonds link Cys-378–Cys-412 and Cys-390–Cys-429.

Belongs to the peptidase C13 family. Homodimer before autocatalytic removal of the propeptide. Monomer after autocatalytic processing. May interact with integrins. Activated by autocatalytic processing at pH 4. In terms of tissue distribution, ubiquitous. Particularly abundant in kidney, heart and placenta.

The protein resides in the lysosome. The catalysed reaction is Hydrolysis of proteins and small molecule substrates at -Asn-|-Xaa- bonds.. Inhibited by CST6. Functionally, has a strict specificity for hydrolysis of asparaginyl bonds. Can also cleave aspartyl bonds slowly, especially under acidic conditions. Involved in the processing of proteins for MHC class II antigen presentation in the lysosomal/endosomal system. Also involved in MHC class I antigen presentation in cross-presenting dendritic cells by mediating cleavage and maturation of Perforin-2 (MPEG1), thereby promoting antigen translocation in the cytosol. Required for normal lysosomal protein degradation in renal proximal tubules. Required for normal degradation of internalized EGFR. Plays a role in the regulation of cell proliferation via its role in EGFR degradation. This is Legumain from Homo sapiens (Human).